Consider the following 300-residue polypeptide: Small ribosomal subunit protein uS4m (300 aa).

The 64-residue stretch at 146 to 209 folds into the S4 RNA-binding domain; that stretch reads KRVDMVLLRS…MKRKLLKRLK (64 aa).

It belongs to the universal ribosomal protein uS4 family.

It localises to the mitochondrion. The protein is Small ribosomal subunit protein uS4m (mrps4) of Dictyostelium discoideum (Social amoeba).